Consider the following 86-residue polypeptide: Large ribosomal subunit protein bL27 (86 aa).

A disordered region spans residues 1–20 (MAHKKAGGSSRNGRDSESKR).

The protein belongs to the bacterial ribosomal protein bL27 family.

The protein is Large ribosomal subunit protein bL27 of Paraburkholderia phymatum (strain DSM 17167 / CIP 108236 / LMG 21445 / STM815) (Burkholderia phymatum).